The sequence spans 66 residues: KEGYIVNYYDGCKYPCVKLGDNDYCLRECRLRYYKSAGGYCYAFACWCTHLYEQAVVWPLPNKTCN.

The LCN-type CS-alpha/beta domain maps to 1-66 (KEGYIVNYYD…VWPLPNKTCN (66 aa)). Intrachain disulfides connect Cys12–Cys65, Cys16–Cys41, Cys25–Cys46, and Cys29–Cys48.

Expressed by the venom gland.

It is found in the secreted. Beta toxins bind voltage-independently at site-4 of sodium channels (Nav) and shift the voltage of activation toward more negative potentials thereby affecting sodium channel activation and promoting spontaneous and repetitive firing. This toxin acts on human Nav1.2/SCN2A, Nav1.4/SCN4A and Nav1.6/SCN8A voltage-gated sodium channels. Also, it reduces the peak of sodium currents in Nav1.5/SCN5A at all potentials. In vivo, is lethal to mice when intraperitoneally injected at a dose of 5ug. No activity is observed when injected into crickets or woodlice. This chain is Beta-mammal toxin Co3, found in Centruroides ornatus (Scorpion).